A 346-amino-acid chain; its full sequence is Phosphate acyltransferase (346 aa).

The protein belongs to the PlsX family. As to quaternary structure, homodimer. Probably interacts with PlsY.

The protein resides in the cytoplasm. The catalysed reaction is a fatty acyl-[ACP] + phosphate = an acyl phosphate + holo-[ACP]. Its pathway is lipid metabolism; phospholipid metabolism. Catalyzes the reversible formation of acyl-phosphate (acyl-PO(4)) from acyl-[acyl-carrier-protein] (acyl-ACP). This enzyme utilizes acyl-ACP as fatty acyl donor, but not acyl-CoA. This chain is Phosphate acyltransferase, found in Deinococcus geothermalis (strain DSM 11300 / CIP 105573 / AG-3a).